A 351-amino-acid chain; its full sequence is Dihydroorotate dehydrogenase (quinone) (351 aa).

FMN contacts are provided by residues 67–71 (AGFDK) and Thr-91. Lys-71 provides a ligand contact to substrate. Position 116–120 (116–120 (NAMGF)) interacts with substrate. Positions 145 and 178 each coordinate FMN. Asn-178 is a substrate binding site. Residue Ser-181 is the Nucleophile of the active site. Residue Asn-183 coordinates substrate. 2 residues coordinate FMN: Lys-214 and Thr-242. 243–244 (NT) serves as a coordination point for substrate. FMN contacts are provided by residues Gly-262, Gly-291, and 312–313 (YS).

This sequence belongs to the dihydroorotate dehydrogenase family. Type 2 subfamily. In terms of assembly, monomer. FMN serves as cofactor.

The protein localises to the cell membrane. The catalysed reaction is (S)-dihydroorotate + a quinone = orotate + a quinol. It functions in the pathway pyrimidine metabolism; UMP biosynthesis via de novo pathway; orotate from (S)-dihydroorotate (quinone route): step 1/1. In terms of biological role, catalyzes the conversion of dihydroorotate to orotate with quinone as electron acceptor. The polypeptide is Dihydroorotate dehydrogenase (quinone) (Helicobacter acinonychis (strain Sheeba)).